The chain runs to 252 residues: Imidazole glycerol phosphate synthase subunit HisF (252 aa).

Active-site residues include Asp-11 and Asp-130.

Belongs to the HisA/HisF family. In terms of assembly, heterodimer of HisH and HisF.

It localises to the cytoplasm. It catalyses the reaction 5-[(5-phospho-1-deoxy-D-ribulos-1-ylimino)methylamino]-1-(5-phospho-beta-D-ribosyl)imidazole-4-carboxamide + L-glutamine = D-erythro-1-(imidazol-4-yl)glycerol 3-phosphate + 5-amino-1-(5-phospho-beta-D-ribosyl)imidazole-4-carboxamide + L-glutamate + H(+). It participates in amino-acid biosynthesis; L-histidine biosynthesis; L-histidine from 5-phospho-alpha-D-ribose 1-diphosphate: step 5/9. In terms of biological role, IGPS catalyzes the conversion of PRFAR and glutamine to IGP, AICAR and glutamate. The HisF subunit catalyzes the cyclization activity that produces IGP and AICAR from PRFAR using the ammonia provided by the HisH subunit. In Dictyoglomus turgidum (strain DSM 6724 / Z-1310), this protein is Imidazole glycerol phosphate synthase subunit HisF.